The sequence spans 339 residues: Ketol-acid reductoisomerase (NADP(+)) (339 aa).

The region spanning 1 to 182 (MRVYYDSDAD…GGGRAGIIET (182 aa)) is the KARI N-terminal Rossmann domain. NADP(+)-binding positions include 24 to 27 (YGSQ), Arg48, Ser51, and 83 to 86 (DEGQ). Residue His108 is part of the active site. Position 134 (Gly134) interacts with NADP(+). A KARI C-terminal knotted domain is found at 183-328 (TFKEECETDL…EKLRAMMPWI (146 aa)). Residues Asp191, Glu195, Glu227, and Glu231 each coordinate Mg(2+). A substrate-binding site is contributed by Ser252.

It belongs to the ketol-acid reductoisomerase family. It depends on Mg(2+) as a cofactor.

It carries out the reaction (2R)-2,3-dihydroxy-3-methylbutanoate + NADP(+) = (2S)-2-acetolactate + NADPH + H(+). The enzyme catalyses (2R,3R)-2,3-dihydroxy-3-methylpentanoate + NADP(+) = (S)-2-ethyl-2-hydroxy-3-oxobutanoate + NADPH + H(+). The protein operates within amino-acid biosynthesis; L-isoleucine biosynthesis; L-isoleucine from 2-oxobutanoate: step 2/4. It participates in amino-acid biosynthesis; L-valine biosynthesis; L-valine from pyruvate: step 2/4. Functionally, involved in the biosynthesis of branched-chain amino acids (BCAA). Catalyzes an alkyl-migration followed by a ketol-acid reduction of (S)-2-acetolactate (S2AL) to yield (R)-2,3-dihydroxy-isovalerate. In the isomerase reaction, S2AL is rearranged via a Mg-dependent methyl migration to produce 3-hydroxy-3-methyl-2-ketobutyrate (HMKB). In the reductase reaction, this 2-ketoacid undergoes a metal-dependent reduction by NADPH to yield (R)-2,3-dihydroxy-isovalerate. This Acidiphilium cryptum (strain JF-5) protein is Ketol-acid reductoisomerase (NADP(+)).